A 250-amino-acid polypeptide reads, in one-letter code: Small ribosomal subunit protein uS3 (250 aa).

The region spanning 39–107 is the KH type-2 domain; it reads VREFLTKKLK…PAQVSINEID (69 aa). Residues 215 to 250 form a disordered region; it reads MNPAPAEERPAKRGRGRGEGQERRGRRGDRAADKGE. Positions 220–250 are enriched in basic and acidic residues; it reads AEERPAKRGRGRGEGQERRGRRGDRAADKGE.

It belongs to the universal ribosomal protein uS3 family. In terms of assembly, part of the 30S ribosomal subunit. Forms a tight complex with proteins S10 and S14.

In terms of biological role, binds the lower part of the 30S subunit head. Binds mRNA in the 70S ribosome, positioning it for translation. The protein is Small ribosomal subunit protein uS3 of Acinetobacter baumannii (strain SDF).